We begin with the raw amino-acid sequence, 754 residues long: MGIVKGRSRAGLFIGFLFIVNVGFCVFAQESSNEERKIYVVHLGVRRHDDSELVSESHQRMLESVFESAEAARESIVYNYHHGFSGFAARLTDSQAKQLSDRPDVFSVAPNRKVELQSTRIYDYLGLSPSFPSGVLHESNMGSDLVIGFLDSGVWPESPAYNDEGLEPIPKHWKGKCVAGEDFDPAKHCNKKLVGAKYFTDGFDENNSGISEEDFMSPRGYRGHGTMVSSIAASSFVPNVSYGGLAPGVMRGAAPKARIAMYKIVWDRALLMSSTATMVKAFDEAINDGVDVLSISLASAAPFRPIDSITGDLELGSFHAVMKGIPVIAGASNTGPEAYTVANVFPWMLTVAATNIDRTFYADMTFGNNITIIGQAQYTGKEVSAGLVYIEHYKTDTSGMLGKVVLTFVKEDWEMASALATTTINKAAGLIVARSGDYQSDIVYNQPFIYVDYEVGAKILRYIRSSSSPTIKISTGKTLVGRPIATQVCGFSSRGPNGLSPAILKPDIAAPGVTILGATSQAYPDSFGGYFLGTGTSYATPVVAGLVVLLKALHPDWSPAALKSAIMTTAWKTDPSGEPIFAEGEPRKLADPFDYGAGLVNAERAKDPGLVYDMNIDDYIHYFCATGYNDTSITIITGKPTKCSSPLPSILDLNYPAITIPDLEEEVTVTRTVTNVGPVDSVYRAVVEPPRGVEIVVEPETLVFCSNTKKLGFKVRVSSSHKSNTGFFFGSFTWTDGTRNVTIPLSVRIRVLNP.

The first 28 residues, 1–28 (MGIVKGRSRAGLFIGFLFIVNVGFCVFA), serve as a signal peptide directing secretion. The propeptide at 29-117 (QESSNEERKI…VAPNRKVELQ (89 aa)) is activation peptide. The Inhibitor I9 domain occupies 39–116 (YVVHLGVRRH…SVAPNRKVEL (78 aa)). The Peptidase S8 domain maps to 121–606 (IYDYLGLSPS…AGLVNAERAK (486 aa)). The Charge relay system role is filled by aspartate 151. Residue asparagine 206 is glycosylated (N-linked (GlcNAc...) asparagine). The active-site Charge relay system is histidine 224. N-linked (GlcNAc...) asparagine glycans are attached at residues asparagine 239 and asparagine 369. Serine 537 (charge relay system) is an active-site residue. N-linked (GlcNAc...) asparagine glycans are attached at residues asparagine 629 and asparagine 740.

Belongs to the peptidase S8 family.

It localises to the secreted. The chain is Subtilisin-like protease SBT3.12 from Arabidopsis thaliana (Mouse-ear cress).